The sequence spans 116 residues: Large ribosomal subunit protein uL18 (116 aa).

The protein belongs to the universal ribosomal protein uL18 family. In terms of assembly, part of the 50S ribosomal subunit; part of the 5S rRNA/L5/L18/L25 subcomplex. Contacts the 5S and 23S rRNAs.

Functionally, this is one of the proteins that bind and probably mediate the attachment of the 5S RNA into the large ribosomal subunit, where it forms part of the central protuberance. This Shewanella woodyi (strain ATCC 51908 / MS32) protein is Large ribosomal subunit protein uL18.